Consider the following 329-residue polypeptide: Mas-related G-protein coupled receptor member X2 (329 aa).

The Extracellular portion of the chain corresponds to 1-33; the sequence is MDPTTPAWGTESTTMNGNDQALPLLCGKETMIS. Residues 34 to 54 traverse the membrane as a helical segment; it reads VFLILFIALVGLVGNAFVLWL. Over 55-63 the chain is Cytoplasmic; sequence LGFRMRRNA. Residues 64–84 traverse the membrane as a helical segment; that stretch reads FSVYVLSLAGADFLFLCFQMT. At 85–96 the chain is on the extracellular side; sequence SCLAYLINFFGS. The helical transmembrane segment at 97-116 threads the bilayer; it reads ISINIPSFFTVMTCAYLAGL. At 117–143 the chain is on the cytoplasmic side; the sequence is SMLSAISTERCLSVLWPIWYRCRRPRH. The chain crosses the membrane as a helical span at residues 144–164; sequence LSAVMCVLLWALSLLLSILEG. Residues 165 to 183 are Extracellular-facing; it reads KFCGFLFSDDDPGWCQTFD. Residues 184–204 traverse the membrane as a helical segment; sequence FITAAWLMFLFVVLCGSSLAL. The Cytoplasmic portion of the chain corresponds to 205–227; that stretch reads LVRILCGSRSLPLTRLYLTILLT. A helical membrane pass occupies residues 228–248; the sequence is VLIFLLCGLPFGIQWFLILWI. The Extracellular portion of the chain corresponds to 249–263; sequence WKNSVVLFCHIHPIS. The helical transmembrane segment at 264-284 threads the bilayer; sequence VVLSSFNSSANPIIYFFVGSF. Residues 285–329 lie on the Cytoplasmic side of the membrane; sequence RKQWRLRQPILKLALQRALQDTAEVDHSEGCFSQGTLEMSRSSLV.

This sequence belongs to the G-protein coupled receptor 1 family. Mas subfamily.

It localises to the cell membrane. Mast cell-specific receptor for basic secretagogues, i.e. cationic amphiphilic drugs, as well as endo- or exogenous peptides, consisting of a basic head group and a hydrophobic core. Recognizes and binds small molecules containing a cyclized tetrahydroisoquinoline (THIQ), such as non-steroidal neuromuscular blocking drugs (NMBDs), including tubocurarine and atracurium. In response to these compounds, mediates pseudo-allergic reactions characterized by histamine release, inflammation and airway contraction. The chain is Mas-related G-protein coupled receptor member X2 (MRGPRX2) from Macaca mulatta (Rhesus macaque).